The following is a 649-amino-acid chain: 1-deoxy-D-xylulose-5-phosphate synthase 1 (649 aa).

Thiamine diphosphate-binding positions include His79 and 120–122; that span reads AHS. Asp151 contacts Mg(2+). Thiamine diphosphate-binding positions include 152–153, Asn180, Tyr289, and Glu371; that span reads GS. Residue Asn180 coordinates Mg(2+).

This sequence belongs to the transketolase family. DXPS subfamily. As to quaternary structure, homodimer. It depends on Mg(2+) as a cofactor. The cofactor is thiamine diphosphate.

It catalyses the reaction D-glyceraldehyde 3-phosphate + pyruvate + H(+) = 1-deoxy-D-xylulose 5-phosphate + CO2. Its pathway is metabolic intermediate biosynthesis; 1-deoxy-D-xylulose 5-phosphate biosynthesis; 1-deoxy-D-xylulose 5-phosphate from D-glyceraldehyde 3-phosphate and pyruvate: step 1/1. Catalyzes the acyloin condensation reaction between C atoms 2 and 3 of pyruvate and glyceraldehyde 3-phosphate to yield 1-deoxy-D-xylulose-5-phosphate (DXP). The chain is 1-deoxy-D-xylulose-5-phosphate synthase 1 from Zymomonas mobilis subsp. mobilis (strain ATCC 31821 / ZM4 / CP4).